Reading from the N-terminus, the 419-residue chain is Phosphatidylcholine:ceramide cholinephosphotransferase 1 (419 aa).

One can recognise an SAM domain in the interval 13–76; it reads WSPKKVADWL…LDMIETLKME (64 aa). A Phosphoserine modification is found at serine 14. 5 consecutive transmembrane segments (helical) span residues 142–162, 190–210, 221–241, 282–302, and 310–330; these read FLAF…ISVV, FSIC…QWLL, FFCI…VTTL, MCGD…YLFI, and LWWY…CILL. The active site involves histidine 291. The Cytoplasmic portion of the chain corresponds to 331–419; that stretch reads AHDHYTVDVV…VKYSRLVNDT (89 aa). Residues histidine 334 and aspartate 338 contribute to the active site.

The protein belongs to the sphingomyelin synthase family. As to expression, isoform 1 is widely expressed, isoform 2 shows a more narrow distribution and isoform 3 is detected only in testis and heart.

The protein resides in the golgi apparatus membrane. The catalysed reaction is an N-acylsphing-4-enine + a 1,2-diacyl-sn-glycero-3-phosphocholine = a sphingomyelin + a 1,2-diacyl-sn-glycerol. The enzyme catalyses 1-(9Z-octadecenoyl)-2-acyl-sn-3-glycerol + a sphingomyelin = a 1-(9Z-octadecenoyl)-2-acyl-sn-glycero-3-phosphocholine + an N-acylsphing-4-enine. It catalyses the reaction N-hexadecanoylsphinganine + a 1,2-diacyl-sn-glycero-3-phosphocholine = N-hexadecanoyl-sphinganine-1-phosphocholine + a 1,2-diacyl-sn-glycerol. It carries out the reaction N-hexadecanoyl-(4R)-hydroxysphinganine + a 1,2-diacyl-sn-glycero-3-phosphocholine = N-hexadecanoyl-(4R)-hydroxysphinganine-phosphocholine + a 1,2-diacyl-sn-glycerol. The catalysed reaction is an N-acylsphing-4-enine + a 1,2-diacyl-sn-glycero-3-phosphoethanolamine = an N-acylsphing-4-enine 1-phosphoethanolamine + a 1,2-diacyl-sn-glycerol. It participates in sphingolipid metabolism. Major sphingomyelin synthase at the Golgi apparatus. Catalyzes the reversible transfer of phosphocholine moiety in sphingomyelin biosynthesis: in the forward reaction transfers phosphocholine head group of phosphatidylcholine (PC) on to ceramide (CER) to form ceramide phosphocholine (sphingomyelin, SM) and diacylglycerol (DAG) as by-product, and in the reverse reaction transfers phosphocholine from SM to DAG to form PC and CER. The direction of the reaction depends on the levels of CER and DAG in Golgi membranes. Converts the newly synthesized CER, that is transported from the endoplasmic reticulum to the trans-Golgi by the Cer transport protein (CERT), to SM. Can form a heteromeric complex with glucosylceramide synthase (GCS) increasing SMS activity and reducing glucosylceramide synthesis, a critical mechanism that controls the metabolic fate of CER in the Golgi. Does not use free phosphorylcholine or CDP-choline as donor. Can also transfer phosphoethanolamine head group of phosphatidylethanolamine (PE) on to CER to form ceramide phosphoethanolamine (CPE). Regulates receptor-mediated signal transduction via mitogenic DAG and proapoptotic CER, as well as via SM, a structural component of membrane rafts that serve as platforms for signal transduction and protein sorting. Plays a role in secretory transport via regulation of DAG pool at the Golgi apparatus and its downstream effects on PRKD1. Its function is as follows. (Microbial infection) Contributes to the brain SM production for Japanese encephalitis virus attachment and infection. This Mus musculus (Mouse) protein is Phosphatidylcholine:ceramide cholinephosphotransferase 1 (Sgms1).